A 479-amino-acid chain; its full sequence is ATP synthase subunit beta (479 aa).

ATP is bound at residue 158 to 165 (GGAGLGKT).

The protein belongs to the ATPase alpha/beta chains family. F-type ATPases have 2 components, CF(1) - the catalytic core - and CF(0) - the membrane proton channel. CF(1) has five subunits: alpha(3), beta(3), gamma(1), delta(1), epsilon(1). CF(0) has three main subunits: a(1), b(2) and c(9-12). The alpha and beta chains form an alternating ring which encloses part of the gamma chain. CF(1) is attached to CF(0) by a central stalk formed by the gamma and epsilon chains, while a peripheral stalk is formed by the delta and b chains.

The protein resides in the cell inner membrane. The catalysed reaction is ATP + H2O + 4 H(+)(in) = ADP + phosphate + 5 H(+)(out). Its function is as follows. Produces ATP from ADP in the presence of a proton gradient across the membrane. The catalytic sites are hosted primarily by the beta subunits. The chain is ATP synthase subunit beta from Rhodopirellula baltica (strain DSM 10527 / NCIMB 13988 / SH1).